The chain runs to 141 residues: Ribosome-binding factor A (141 aa).

It belongs to the RbfA family. As to quaternary structure, monomer. Binds 30S ribosomal subunits, but not 50S ribosomal subunits or 70S ribosomes.

Its subcellular location is the cytoplasm. Functionally, one of several proteins that assist in the late maturation steps of the functional core of the 30S ribosomal subunit. Associates with free 30S ribosomal subunits (but not with 30S subunits that are part of 70S ribosomes or polysomes). Required for efficient processing of 16S rRNA. May interact with the 5'-terminal helix region of 16S rRNA. The polypeptide is Ribosome-binding factor A (Maricaulis maris (strain MCS10) (Caulobacter maris)).